A 608-amino-acid chain; its full sequence is ATP-citrate synthase beta chain protein 1 (608 aa).

Residues 214–234 (ILRFNNIPQVKMMVVLGELGG) and 265–291 (FKSEVQFGHAGAKSGGELESAQAKNQA) contribute to the ATP site. Glu-231 is a Mg(2+) binding site. The active-site Tele-phosphohistidine intermediate is the His-273. Position 292–302 (292–302 (LKDAGAVVPTS)) interacts with CoA.

It belongs to the succinate/malate CoA ligase alpha subunit family. As to quaternary structure, heterooctamer of 4 alpha and 4 beta chains.

Its subcellular location is the cytoplasm. The protein resides in the cytosol. The enzyme catalyses oxaloacetate + acetyl-CoA + ADP + phosphate = citrate + ATP + CoA. Its function is as follows. ATP citrate-lyase is the primary enzyme responsible for the synthesis of cytosolic acetyl-CoA, used for the elongation of fatty acids and biosynthesis of isoprenoids, flavonoids and malonated derivatives. May supply substrate to the cytosolic acetyl-CoA carboxylase, which generates the malonyl-CoA used for the synthesis of a multitude of compounds, including very long chain fatty acids and flavonoids. In contrast to all known animal ACL enzymes having a homomeric structure, plant ACLs are composed of alpha and beta chains. The sequence is that of ATP-citrate synthase beta chain protein 1 (ACLB-1) from Oryza sativa subsp. japonica (Rice).